The following is a 327-amino-acid chain: Putative hydroxymethylpyrimidine/phosphomethylpyrimidine kinase C18B5.05c (327 aa).

Gln-54 is a 4-amino-5-hydroxymethyl-2-methylpyrimidine binding site.

It belongs to the ThiD family.

It localises to the cytoplasm. The protein resides in the nucleus. It catalyses the reaction 4-amino-5-hydroxymethyl-2-methylpyrimidine + ATP = 4-amino-2-methyl-5-(phosphooxymethyl)pyrimidine + ADP + H(+). The enzyme catalyses 4-amino-2-methyl-5-(phosphooxymethyl)pyrimidine + ATP = 4-amino-2-methyl-5-(diphosphooxymethyl)pyrimidine + ADP. It functions in the pathway cofactor biosynthesis; thiamine diphosphate biosynthesis; 4-amino-2-methyl-5-diphosphomethylpyrimidine from 5-amino-1-(5-phospho-D-ribosyl)imidazole: step 2/3. It participates in cofactor biosynthesis; thiamine diphosphate biosynthesis; 4-amino-2-methyl-5-diphosphomethylpyrimidine from 5-amino-1-(5-phospho-D-ribosyl)imidazole: step 3/3. Functionally, catalyzes the phosphorylation of hydroxymethylpyrimidine phosphate (HMP-P) to HMP-PP, and of HMP to HMP-P. This is Putative hydroxymethylpyrimidine/phosphomethylpyrimidine kinase C18B5.05c from Schizosaccharomyces pombe (strain 972 / ATCC 24843) (Fission yeast).